We begin with the raw amino-acid sequence, 208 residues long: MVLDELISEFDRGLRSLTGISRMSRPVPAPAEAPAAELTPAERTHAAGLMRVNHVGEVCAQALYQAQKLTARSSAAKAMFEEAAREEEDHLAWTAHRLKELDSRPSVLNPLWYAGALAIGVAAGTLGDKVSLGFMAETERQVESHLDGHLSDLPAGDTASRAIVEQMRADEAKHGKAATDAGGIELPLPARMLMRAASKIMTRTAYYL.

Fe cation contacts are provided by Glu57, Glu87, His90, Glu139, Glu171, and His174.

This sequence belongs to the COQ7 family. Requires Fe cation as cofactor.

It localises to the cell membrane. The catalysed reaction is a 5-methoxy-2-methyl-3-(all-trans-polyprenyl)benzene-1,4-diol + AH2 + O2 = a 3-demethylubiquinol + A + H2O. It functions in the pathway cofactor biosynthesis; ubiquinone biosynthesis. In terms of biological role, catalyzes the hydroxylation of 2-nonaprenyl-3-methyl-6-methoxy-1,4-benzoquinol during ubiquinone biosynthesis. The polypeptide is 3-demethoxyubiquinol 3-hydroxylase (Burkholderia multivorans (strain ATCC 17616 / 249)).